Here is a 1231-residue protein sequence, read N- to C-terminus: Protein FAM193A (1231 aa).

A coiled-coil region spans residues 106–142 (CTEDMYSTLLQRYQRSEEELRKVAEEWLECQKRIDAY). Residues 249–272 (DYLSEMRPPSVSSASSGSGSSSPI) are disordered. Positions 258–270 (SVSSASSGSGSSS) are enriched in low complexity. The residue at position 293 (serine 293) is a Phosphoserine. 5 disordered regions span residues 331-405 (NGGG…QAEQ), 633-703 (QSSS…APSF), 719-789 (SFCP…NQKE), 826-845 (LTKR…EREG), and 860-1174 (NSSE…SSLD). The span at 355-365 (EADDEDADGES) shows a compositional bias: acidic residues. Serine 648 is subject to Phosphoserine. The span at 676–691 (LAPLPALSPSALSPAS) shows a compositional bias: low complexity. The span at 761 to 773 (QQDDGDESADEDS) shows a compositional bias: acidic residues. The span at 776 to 785 (EHSSSTSTST) shows a compositional bias: low complexity. A compositionally biased stretch (basic residues) spans 872–881 (AAKRARHKQR). Residues 877–973 (RHKQRKLEEK…ATESISNSEN (97 aa)) are a coiled coil. The segment covering 882–909 (KLEEKARLEAEARAREHLHHQEEQKQRE) has biased composition (basic and acidic residues). The segment covering 910-920 (EEEDEEEEDEE) has biased composition (acidic residues). Residues 921 to 935 (QHFKEEFQRLQELQK) show a composition bias toward basic and acidic residues. Residues 937 to 946 (RAAKKKKKDR) are compositionally biased toward basic residues. Polar residues predominate over residues 962–979 (QAATESISNSENIHNGSL). A phosphoserine mark is found at serine 1136 and serine 1151. Residues 1156-1166 (GKNKKNKKKKG) are compositionally biased toward basic residues.

It belongs to the FAM193 family.

The chain is Protein FAM193A (Fam193a) from Mus musculus (Mouse).